The sequence spans 644 residues: Polyglycine hydrolase (644 aa).

Residues 1–23 (MYTSRSLFSTLASCLSLATLVAS) form the signal peptide. Residues Asn-100, Asn-144, Asn-159, Asn-244, and Asn-340 are each glycosylated (N-linked (GlcNAc...) asparagine). Cys-149 and Cys-183 are oxidised to a cystine. Residue Ser-369 is part of the active site. N-linked (GlcNAc...) asparagine glycans are attached at residues Asn-389, Asn-410, Asn-443, and Asn-486.

Belongs to the peptidase S12 family.

It localises to the secreted. It carries out the reaction a glycyl-glycyl-[protein] + H2O = N-terminal glycyl-[protein] + [protein]-C-terminal glycine. Its activity is regulated as follows. Not inhibited by phenylmethylsulfonyl fluoride (PMSF; serine peptidase class S1 inhibitor), clavulanic acid (beta-lactamase inhibitor) or ampicillin (penicillin-binding protein (PBP) inhibitor). Its function is as follows. Serine-type endopeptidase that cleaves Gly-Gly bonds in the polyglycine linker of host plant class IV chitinases to disrupt their chitin-binding, and thereby plays a role in lowering the defense responses of the host to the fungus. Degrades Z.mays Endochitinase A (CHIA). Has low proteolytic activity on Z.mays Endochitinase B (CHIB). This Cochliobolus carbonum (strain 26-R-13) (Maize leaf spot fungus) protein is Polyglycine hydrolase.